Here is a 343-residue protein sequence, read N- to C-terminus: NADH-quinone oxidoreductase subunit H (343 aa).

A run of 8 helical transmembrane segments spans residues 21–41 (WTLVWTILKIAVLIAPILFCV), 95–115 (FILAPILTFSTALVSWAVVPF), 124–144 (VNVGVLFILAMSSLGAYGVLL), 172–192 (MGFTLVPVIMLSGSLNLGDIV), 197–217 (GLWYALPLLPGFFIYFISVVA), 257–277 (IIMVSVLGSLMFLGGWLPPIE), 281–301 (FIPGIVWLILKTGVLIFFFLW), and 317–337 (LGWKVFLPISLAWIFIVGLAM).

This sequence belongs to the complex I subunit 1 family. As to quaternary structure, NDH-1 is composed of 14 different subunits. Subunits NuoA, H, J, K, L, M, N constitute the membrane sector of the complex.

The protein localises to the cell inner membrane. It carries out the reaction a quinone + NADH + 5 H(+)(in) = a quinol + NAD(+) + 4 H(+)(out). Functionally, NDH-1 shuttles electrons from NADH, via FMN and iron-sulfur (Fe-S) centers, to quinones in the respiratory chain. The immediate electron acceptor for the enzyme in this species is believed to be ubiquinone. Couples the redox reaction to proton translocation (for every two electrons transferred, four hydrogen ions are translocated across the cytoplasmic membrane), and thus conserves the redox energy in a proton gradient. This subunit may bind ubiquinone. This Magnetococcus marinus (strain ATCC BAA-1437 / JCM 17883 / MC-1) protein is NADH-quinone oxidoreductase subunit H.